A 435-amino-acid polypeptide reads, in one-letter code: Methylenetetrahydrofolate--tRNA-(uracil-5-)-methyltransferase TrmFO (435 aa).

10–15 (GAGLAG) lines the FAD pocket.

The protein belongs to the MnmG family. TrmFO subfamily. It depends on FAD as a cofactor.

The protein resides in the cytoplasm. The enzyme catalyses uridine(54) in tRNA + (6R)-5,10-methylene-5,6,7,8-tetrahydrofolate + NADH + H(+) = 5-methyluridine(54) in tRNA + (6S)-5,6,7,8-tetrahydrofolate + NAD(+). The catalysed reaction is uridine(54) in tRNA + (6R)-5,10-methylene-5,6,7,8-tetrahydrofolate + NADPH + H(+) = 5-methyluridine(54) in tRNA + (6S)-5,6,7,8-tetrahydrofolate + NADP(+). Catalyzes the folate-dependent formation of 5-methyl-uridine at position 54 (M-5-U54) in all tRNAs. The chain is Methylenetetrahydrofolate--tRNA-(uracil-5-)-methyltransferase TrmFO from Geotalea uraniireducens (strain Rf4) (Geobacter uraniireducens).